Consider the following 261-residue polypeptide: Imidazole glycerol phosphate synthase subunit HisF (261 aa).

Catalysis depends on residues Asp-16 and Asp-135.

Belongs to the HisA/HisF family. Heterodimer of HisH and HisF.

It localises to the cytoplasm. It catalyses the reaction 5-[(5-phospho-1-deoxy-D-ribulos-1-ylimino)methylamino]-1-(5-phospho-beta-D-ribosyl)imidazole-4-carboxamide + L-glutamine = D-erythro-1-(imidazol-4-yl)glycerol 3-phosphate + 5-amino-1-(5-phospho-beta-D-ribosyl)imidazole-4-carboxamide + L-glutamate + H(+). It functions in the pathway amino-acid biosynthesis; L-histidine biosynthesis; L-histidine from 5-phospho-alpha-D-ribose 1-diphosphate: step 5/9. Functionally, IGPS catalyzes the conversion of PRFAR and glutamine to IGP, AICAR and glutamate. The HisF subunit catalyzes the cyclization activity that produces IGP and AICAR from PRFAR using the ammonia provided by the HisH subunit. In Mycobacterium ulcerans (strain Agy99), this protein is Imidazole glycerol phosphate synthase subunit HisF.